A 2643-amino-acid polypeptide reads, in one-letter code: BAH and coiled-coil domain-containing protein 1 (2643 aa).

Disordered regions lie at residues 23-45 and 84-106; these read SAAA…HFQP and SAAS…RGSH. N6-acetyllysine is present on K220. 2 stretches are compositionally biased toward basic and acidic residues: residues 224-249 and 683-702; these read KEKV…DRQK and ERPD…DGEV. 5 disordered regions span residues 224–273, 674–704, 721–758, 985–1023, and 1038–1299; these read KEKV…SCEG, PATK…EVRQ, GRPD…LESE, RKPE…PSSA, and TLKT…KALP. Residues 985-1003 show a composition bias toward basic and acidic residues; sequence RKPEDRHMELEEAAQEKTP. Residues 1133–1149 are compositionally biased toward pro residues; the sequence is RPEPPRTFLPGEPPPCS. Residues 1210-1224 are compositionally biased toward polar residues; sequence ATGQTNSTQGGMQNE. Residues 1269–1284 are compositionally biased toward acidic residues; that stretch reads QEEETQLEESGGDSEV. Coiled-coil stretches lie at residues 1346-1373 and 1437-1486; these read ALLS…DVLA and LKAA…SSRS. A compositionally biased stretch (basic and acidic residues) spans 1466-1484; it reads QRELARLQRRHDHEREESS. Disordered stretches follow at residues 1466 to 1520, 1537 to 1559, 1604 to 1641, 1746 to 1781, 1875 to 1896, 2055 to 2124, 2322 to 2341, and 2349 to 2386; these read QREL…DSKK, GDEP…QSVS, KEAA…GREM, RAPG…SRDT, FDED…GVQL, SSCR…HFLG, CPSS…TGVP, and SMSS…SDDE. Basic residues predominate over residues 1487 to 1501; the sequence is PARRGPGRPRKRKHS. Residues 1631–1641 are compositionally biased toward basic and acidic residues; sequence PHPDGDSGREM. The span at 1757–1767 shows a compositional bias: basic residues; that stretch reads GKKKAKGKVKT. Acidic residues predominate over residues 1875–1892; it reads FDEDDTSFSDEEEEEEEA. A compositionally biased stretch (low complexity) spans 2349–2374; sequence SMSSSSSGSSTSSSSGSVSTSSLCSS. Residues 2375 to 2386 show a composition bias toward acidic residues; the sequence is DNEDSSYSSDDE. Positions 2517 to 2637 constitute a BAH domain; the sequence is ETLRIGDCAV…PTTGRLVTAD (121 aa).

This chain is BAH and coiled-coil domain-containing protein 1 (Bahcc1), found in Mus musculus (Mouse).